Consider the following 447-residue polypeptide: Keratin, type I cytoskeletal 15 (447 aa).

A head region spans residues 1–93; that stretch reads MATTFLQTSS…GGDGGLLSGN (93 aa). Residues serine 16, serine 28, serine 33, and serine 47 each carry the phosphoserine modification. The segment at 94–129 is coil 1A; that stretch reads EKVTMQNLNDRLASYLDKVRALEEANTELEVKIRDW. In terms of domain architecture, IF rod spans 94–406; the sequence is EKVTMQNLND…NLLEGQDAKM (313 aa). A Phosphothreonine modification is found at threonine 120. A linker 1 region spans residues 130–148; it reads YQKQSPASPDRDYSHYFKT. Positions 149–240 are coil 1B; sequence MEEIRDKILA…KNHEEEMKEF (92 aa). The tract at residues 241-260 is linker 12; that stretch reads SSQLAGQVNVEMDAAPGVDL. The interval 261–402 is coil 2; the sequence is TRMLAEMREQ…STYRNLLEGQ (142 aa). Residue lysine 289 forms a Glycyl lysine isopeptide (Lys-Gly) (interchain with G-Cter in SUMO2) linkage. Residues threonine 290 and threonine 312 each carry the phosphothreonine modification. Residues 403-447 form a tail region; that stretch reads DAKMAAIGVREASLRGGSSGGGSNFHISVEESVDGKVVSSRKRES. Lysine 438 participates in a covalent cross-link: Glycyl lysine isopeptide (Lys-Gly) (interchain with G-Cter in SUMO1); alternate. Residue lysine 438 forms a Glycyl lysine isopeptide (Lys-Gly) (interchain with G-Cter in SUMO2); alternate linkage.

It belongs to the intermediate filament family. In terms of assembly, heterotetramer of two type I and two type II keratins. Forms a heterodimer with KRT14. Interacts with NOD2.

This chain is Keratin, type I cytoskeletal 15, found in Rattus norvegicus (Rat).